The chain runs to 344 residues: S-adenosylmethionine:tRNA ribosyltransferase-isomerase (344 aa).

Belongs to the QueA family. As to quaternary structure, monomer.

The protein localises to the cytoplasm. The enzyme catalyses 7-aminomethyl-7-carbaguanosine(34) in tRNA + S-adenosyl-L-methionine = epoxyqueuosine(34) in tRNA + adenine + L-methionine + 2 H(+). Its pathway is tRNA modification; tRNA-queuosine biosynthesis. Its function is as follows. Transfers and isomerizes the ribose moiety from AdoMet to the 7-aminomethyl group of 7-deazaguanine (preQ1-tRNA) to give epoxyqueuosine (oQ-tRNA). The polypeptide is S-adenosylmethionine:tRNA ribosyltransferase-isomerase (Heliobacterium modesticaldum (strain ATCC 51547 / Ice1)).